Here is a 102-residue protein sequence, read N- to C-terminus: NADH-quinone oxidoreductase subunit K (102 aa).

The next 3 helical transmembrane spans lie at 5–25 (LTQY…GIIL), 30–50 (IIII…NLVA), and 62–82 (IFAL…LAIL).

The protein belongs to the complex I subunit 4L family. In terms of assembly, NDH-1 is composed of 14 different subunits. Subunits NuoA, H, J, K, L, M, N constitute the membrane sector of the complex.

The protein localises to the cell inner membrane. It carries out the reaction a quinone + NADH + 5 H(+)(in) = a quinol + NAD(+) + 4 H(+)(out). Functionally, NDH-1 shuttles electrons from NADH, via FMN and iron-sulfur (Fe-S) centers, to quinones in the respiratory chain. The immediate electron acceptor for the enzyme in this species is believed to be ubiquinone. Couples the redox reaction to proton translocation (for every two electrons transferred, four hydrogen ions are translocated across the cytoplasmic membrane), and thus conserves the redox energy in a proton gradient. The sequence is that of NADH-quinone oxidoreductase subunit K from Beijerinckia indica subsp. indica (strain ATCC 9039 / DSM 1715 / NCIMB 8712).